Reading from the N-terminus, the 317-residue chain is Universal stress protein MT2052 (317 aa).

Residues glycine 13, 128–134 (GYRGQGA), 142–143 (SV), glycine 175, aspartate 208, 277–283 (GSHGRGG), and 291–293 (SVS) each bind ATP.

It belongs to the universal stress protein A family.

This Mycobacterium tuberculosis (strain CDC 1551 / Oshkosh) protein is Universal stress protein MT2052.